Consider the following 412-residue polypeptide: Subtilisin-like protease 6 (412 aa).

An N-terminal signal peptide occupies residues 1-20 (MGFITKAIPIVLAALSTVNG). The propeptide occupies 21-126 (AKILEAGPHA…VVRTSTNGTN (106 aa)). An Inhibitor I9 domain is found at 36-120 (KYIVVMKREV…YIEPDFVVRT (85 aa)). N-linked (GlcNAc...) asparagine glycans are attached at residues Asn123 and Asn126. The Peptidase S8 domain occupies 135–412 (SWGLARVSSK…SKLIYNGSGK (278 aa)). Catalysis depends on charge relay system residues Asp167 and His198. 2 N-linked (GlcNAc...) asparagine glycosylation sites follow: Asn252 and Asn264. The active-site Charge relay system is Ser358. N-linked (GlcNAc...) asparagine glycosylation occurs at Asn408.

Belongs to the peptidase S8 family.

Its subcellular location is the secreted. Functionally, secreted subtilisin-like serine protease with keratinolytic activity that contributes to pathogenicity. This chain is Subtilisin-like protease 6 (SUB6), found in Trichophyton equinum (Horse ringworm fungus).